The primary structure comprises 239 residues: 1-(5-phosphoribosyl)-5-[(5-phosphoribosylamino)methylideneamino] imidazole-4-carboxamide isomerase (239 aa).

Catalysis depends on D8, which acts as the Proton acceptor. D129 (proton donor) is an active-site residue.

The protein belongs to the HisA/HisF family.

Its subcellular location is the cytoplasm. It carries out the reaction 1-(5-phospho-beta-D-ribosyl)-5-[(5-phospho-beta-D-ribosylamino)methylideneamino]imidazole-4-carboxamide = 5-[(5-phospho-1-deoxy-D-ribulos-1-ylimino)methylamino]-1-(5-phospho-beta-D-ribosyl)imidazole-4-carboxamide. Its pathway is amino-acid biosynthesis; L-histidine biosynthesis; L-histidine from 5-phospho-alpha-D-ribose 1-diphosphate: step 4/9. This is 1-(5-phosphoribosyl)-5-[(5-phosphoribosylamino)methylideneamino] imidazole-4-carboxamide isomerase from Bacillus anthracis (strain A0248).